A 162-amino-acid chain; its full sequence is Large ribosomal subunit protein eL24 (162 aa).

Disordered regions lie at residues 64 to 83 (DIHA…PYSR) and 117 to 162 (ERIK…GGKR). Basic residues predominate over residues 71 to 81 (KKRRRTTKKPY). Positions 117–135 (ERIKKTKDEKKAKKAEVTK) are enriched in basic and acidic residues.

It belongs to the eukaryotic ribosomal protein eL24 family.

The protein resides in the cytoplasm. The protein is Large ribosomal subunit protein eL24 (RPL24) of Hordeum vulgare (Barley).